Consider the following 338-residue polypeptide: Ketol-acid reductoisomerase (NADP(+)) (338 aa).

The KARI N-terminal Rossmann domain maps to 1–181; the sequence is MKVFYDKDCD…GGGRAGIIET (181 aa). Residues 24-27, Arg-47, and Ser-52 contribute to the NADP(+) site; that span reads YGSQ. Residue His-107 is part of the active site. Residue Gly-133 participates in NADP(+) binding. The KARI C-terminal knotted domain maps to 182 to 327; sequence NFREETETDL…GKLRAMMPWI (146 aa). Mg(2+) is bound by residues Asp-190, Glu-194, Glu-226, and Glu-230. Residue Ser-251 coordinates substrate.

The protein belongs to the ketol-acid reductoisomerase family. Mg(2+) serves as cofactor.

The enzyme catalyses (2R)-2,3-dihydroxy-3-methylbutanoate + NADP(+) = (2S)-2-acetolactate + NADPH + H(+). The catalysed reaction is (2R,3R)-2,3-dihydroxy-3-methylpentanoate + NADP(+) = (S)-2-ethyl-2-hydroxy-3-oxobutanoate + NADPH + H(+). It participates in amino-acid biosynthesis; L-isoleucine biosynthesis; L-isoleucine from 2-oxobutanoate: step 2/4. It functions in the pathway amino-acid biosynthesis; L-valine biosynthesis; L-valine from pyruvate: step 2/4. Involved in the biosynthesis of branched-chain amino acids (BCAA). Catalyzes an alkyl-migration followed by a ketol-acid reduction of (S)-2-acetolactate (S2AL) to yield (R)-2,3-dihydroxy-isovalerate. In the isomerase reaction, S2AL is rearranged via a Mg-dependent methyl migration to produce 3-hydroxy-3-methyl-2-ketobutyrate (HMKB). In the reductase reaction, this 2-ketoacid undergoes a metal-dependent reduction by NADPH to yield (R)-2,3-dihydroxy-isovalerate. This Bordetella bronchiseptica (strain ATCC BAA-588 / NCTC 13252 / RB50) (Alcaligenes bronchisepticus) protein is Ketol-acid reductoisomerase (NADP(+)).